A 370-amino-acid chain; its full sequence is MDRDLHMRIVVKLGTSVLTDGTDRLHRPRMVDLARQMAQLREAGHEVVLVSSGAVLAGWERLGFPKRRRELTHKQALAAVGQGRLMHIYGQLFEIYDVPVAQTLLTRADLRDRVRYLNARATLLTCLEIGVLPIINENDAVAVDEIRVGDNDTLSALVANLVDAQLLVILSDIAGLYSADPRHNPEATLIDDVAAVNEQVYALAGAAGSHRGTGGMFTKIQAAELATRAGTTMVIAAGNEPNVLVRLVAGESVGTRFRPVSTRLESRKRWIMAERVRQAHIAVDAGAVQALTQQGRSLLPAGIVAVEGEWRRGQTVAIVAPDGQTIACGLCQYAAHEVAQIKGSRTSDIESILGYSYGAEVIHRDDMVAF.

K12 contacts ATP. Residues S52, D139, and N151 each contribute to the substrate site. ATP-binding positions include 171-172 and 213-219; these read SD and TGGMFTK. The region spanning 278-356 is the PUA domain; the sequence is QAHIAVDAGA…SDIESILGYS (79 aa).

Belongs to the glutamate 5-kinase family.

The protein resides in the cytoplasm. The catalysed reaction is L-glutamate + ATP = L-glutamyl 5-phosphate + ADP. It participates in amino-acid biosynthesis; L-proline biosynthesis; L-glutamate 5-semialdehyde from L-glutamate: step 1/2. In terms of biological role, catalyzes the transfer of a phosphate group to glutamate to form L-glutamate 5-phosphate. This chain is Glutamate 5-kinase, found in Herpetosiphon aurantiacus (strain ATCC 23779 / DSM 785 / 114-95).